The sequence spans 147 residues: Mucoricin (147 aa).

In terms of domain architecture, Ricin B-type lectin spans 4–143; that stretch reads EEGRLFFIKS…VSANQRWELV (140 aa).

It belongs to the ribosome-inactivating protein family. Type 1 RIP subfamily.

It is found in the secreted. It carries out the reaction Endohydrolysis of the N-glycosidic bond at one specific adenosine on the 28S rRNA.. In terms of biological role, N-glycosylase that inhibits protein synthesis in the host by depurinating ribosomal rRNA, and thus acts as a ribosomal inactivating protein (RIP). Promotes vascular permeability in the host and induces necrosis and apoptosis of host alveolar epithelial cells. This Rhizopus delemar (strain RA 99-880 / ATCC MYA-4621 / FGSC 9543 / NRRL 43880) (Mucormycosis agent) protein is Mucoricin.